The chain runs to 109 residues: QNRQCCESNLEPLFSGYIETLRREAECAEADSGRLSSELNSLQEVLEGYKRRYEEEVALRATAENEFVALKKDVDCAYLRKSDLEANVEALIQETDFLRRLYEEEIRVL.

Residues 1 to 10 (QNRQCCESNL) form a linker 1 region. Positions 1–109 (QNRQCCESNL…RLYEEEIRVL (109 aa)) constitute an IF rod domain. The interval 11–109 (EPLFSGYIET…RLYEEEIRVL (99 aa)) is coil 1B.

The protein belongs to the intermediate filament family.

Functionally, wool microfibrillar keratin. The chain is Keratin, type II microfibrillar from Ovis aries (Sheep).